Reading from the N-terminus, the 363-residue chain is NAD(P)H-quinone oxidoreductase subunit 1, chloroplastic (363 aa).

8 consecutive transmembrane segments (helical) span residues 30 to 50 (LVPI…IVWL), 98 to 118 (FSIG…VIPF), 127 to 147 (LSIG…GLLM), 165 to 185 (AAQS…ISLL), 203 to 223 (FWGW…ISSL), 248 to 268 (YSGI…LVSS), 300 to 320 (VFGT…FLFI), and 336 to 356 (LLNL…LLTT).

This sequence belongs to the complex I subunit 1 family. NDH is composed of at least 16 different subunits, 5 of which are encoded in the nucleus.

It is found in the plastid. It localises to the chloroplast thylakoid membrane. It carries out the reaction a plastoquinone + NADH + (n+1) H(+)(in) = a plastoquinol + NAD(+) + n H(+)(out). It catalyses the reaction a plastoquinone + NADPH + (n+1) H(+)(in) = a plastoquinol + NADP(+) + n H(+)(out). In terms of biological role, NDH shuttles electrons from NAD(P)H:plastoquinone, via FMN and iron-sulfur (Fe-S) centers, to quinones in the photosynthetic chain and possibly in a chloroplast respiratory chain. The immediate electron acceptor for the enzyme in this species is believed to be plastoquinone. Couples the redox reaction to proton translocation, and thus conserves the redox energy in a proton gradient. This is NAD(P)H-quinone oxidoreductase subunit 1, chloroplastic from Solanum bulbocastanum (Wild potato).